The following is a 249-amino-acid chain: 5'-nucleotidase SurE (249 aa).

Positions 9, 10, 40, and 92 each coordinate a divalent metal cation.

The protein belongs to the SurE nucleotidase family. It depends on a divalent metal cation as a cofactor.

It localises to the cytoplasm. The catalysed reaction is a ribonucleoside 5'-phosphate + H2O = a ribonucleoside + phosphate. Nucleotidase that shows phosphatase activity on nucleoside 5'-monophosphates. The protein is 5'-nucleotidase SurE of Shewanella oneidensis (strain ATCC 700550 / JCM 31522 / CIP 106686 / LMG 19005 / NCIMB 14063 / MR-1).